A 439-amino-acid polypeptide reads, in one-letter code: Membrane sensor protein UhpC (439 aa).

At 1–25 (MLPFLKAPADAPLMTDKYEIDARYR) the chain is on the cytoplasmic side. A helical membrane pass occupies residues 26-45 (YWRRHILLTIWLGYALFYFT). At 46–66 (RKSFNAAVPEILANGVLSRSD) the chain is on the periplasmic side. A helical membrane pass occupies residues 67 to 87 (IGLLATLFYITYGVSKFVSGI). The Cytoplasmic portion of the chain corresponds to 88–95 (VSDRSNAR). Residues 96–118 (YFMGIGLIATGIINILFGFSTSL) traverse the membrane as a helical segment. At 119–121 (WAF) the chain is on the periplasmic side. A helical transmembrane segment spans residues 122–144 (AVLWVLNAFFQGWGSPVCARLLT). Topologically, residues 145 to 162 (AWYSRTERGGWWALWNTA) are cytoplasmic. A helical transmembrane segment spans residues 163–183 (HNVGGALIPIVMAAAALHYGW). Position 184 (Arg-184) is a topological domain, periplasmic. Residues 185-205 (AGMMIAGCMAIVVGIFLCWRL) form a helical membrane-spanning segment. Over 206–244 (RDRPQALGLPAVGEWRHDALEIAQQQEGAGLTRKEILTK) the chain is Cytoplasmic. The chain crosses the membrane as a helical span at residues 245-265 (YVLLNPYIWLLSFCYVLVYVV). The Periplasmic segment spans residues 266 to 289 (RAAINDWGNLYMSETLGVDLVTAN). The chain crosses the membrane as a helical span at residues 290–310 (TAVTMFELGGFIGALVAGWGS). Over 311–322 (DKLFNGNRGPMN) the chain is Cytoplasmic. The helical transmembrane segment at 323 to 343 (LIFAAGILLSVGSLWLMPFAS) threads the bilayer. The Periplasmic portion of the chain corresponds to 344-349 (YVMQAT). Residues 350 to 370 (CFFTIGFFVFGPQMLIGMAAA) form a helical membrane-spanning segment. Residues 371-379 (ECSHKEAAG) lie on the Cytoplasmic side of the membrane. Residues 380-400 (AATGFVGLFAYLGASLAGWPL) traverse the membrane as a helical segment. At 401–410 (AKVLDTWHWS) the chain is on the periplasmic side. The helical transmembrane segment at 411 to 431 (GFFVVISIAAGISALLLLPFL) threads the bilayer. The Cytoplasmic portion of the chain corresponds to 432-439 (NAQTPREA).

It belongs to the major facilitator superfamily. Organophosphate:Pi antiporter (OPA) (TC 2.A.1.4) family.

It is found in the cell inner membrane. In terms of biological role, part of the UhpABC signaling cascade that controls the expression of the hexose phosphate transporter UhpT. UhpC senses external glucose-6-phosphate and interacts with the histidine kinase UhpB, leading to the stimulation of the autokinase activity of UhpB. This chain is Membrane sensor protein UhpC, found in Escherichia coli (strain K12).